Consider the following 31-residue polypeptide: Kalata-B9 (31 aa).

The cyclopeptide (Gly-Asp) cross-link spans 1–31 (GSVFNCGETCVLGTCYTPGCTCNTYRVCTKD). 3 disulfide bridges follow: Cys-6-Cys-20, Cys-10-Cys-22, and Cys-15-Cys-28.

It belongs to the cyclotide family. Bracelet subfamily. In terms of processing, this peptide occurs in both cyclic and linear forms.

Functionally, probably participates in a plant defense mechanism. The protein is Kalata-B9 of Oldenlandia affinis.